A 440-amino-acid polypeptide reads, in one-letter code: MSTPTPKVGFVSLGCPKALVDSERILTQLRMEGYEVVPTYEDADVVVVNTCGFIDSAKAESLEVIGEAIAENGKVIVTGCMGVEEHAIRDVHPSVLAVTGPQQYEQVVTAVHEVVPPKTEHNPLVDLVPPQGVKLTPRHYAYLKISEGCNHSCSFCIIPSMRGKLVSRPVGDVLSEAERLVKAGVKELLVISQDTSAYGVDLKYKTDFWNGQPVKTRMKELCEALSSMGVWVRLHYVYPYPNVDDVIPLMAAGKLLPYLDIPFQHASPKVLKAMKRPAFEDKTLARIKQWREICPELTIRSTFIVGFPGETEEDFQYLLDWLTEAQLDRVGCFQYSPVEGAPANELGLEPVPDEVKQDRWERFMAHQQAISAARLQLKVGKEIEVLIDEVDEQGAVGRSWADAPEIDGNVFVDSDELKPGDKVRVRITDADEYDLWAELV.

Positions 6–116 (PKVGFVSLGC…VVTAVHEVVP (111 aa)) constitute an MTTase N-terminal domain. Residues Cys-15, Cys-51, Cys-80, Cys-149, Cys-153, and Cys-156 each contribute to the [4Fe-4S] cluster site. A Radical SAM core domain is found at 135 to 373 (LTPRHYAYLK…MAHQQAISAA (239 aa)). The region spanning 376-440 (QLKVGKEIEV…DEYDLWAELV (65 aa)) is the TRAM domain.

The protein belongs to the methylthiotransferase family. RimO subfamily. [4Fe-4S] cluster is required as a cofactor.

Its subcellular location is the cytoplasm. The enzyme catalyses L-aspartate(89)-[ribosomal protein uS12]-hydrogen + (sulfur carrier)-SH + AH2 + 2 S-adenosyl-L-methionine = 3-methylsulfanyl-L-aspartate(89)-[ribosomal protein uS12]-hydrogen + (sulfur carrier)-H + 5'-deoxyadenosine + L-methionine + A + S-adenosyl-L-homocysteine + 2 H(+). In terms of biological role, catalyzes the methylthiolation of an aspartic acid residue of ribosomal protein uS12. The sequence is that of Ribosomal protein uS12 methylthiotransferase RimO from Pseudomonas aeruginosa (strain ATCC 15692 / DSM 22644 / CIP 104116 / JCM 14847 / LMG 12228 / 1C / PRS 101 / PAO1).